The chain runs to 38 residues: Non-specific lipid-transfer protein P2 (38 aa).

Belongs to the plant LTP family.

Its subcellular location is the secreted. Its function is as follows. Plant non-specific lipid-transfer proteins transfer phospholipids as well as galactolipids across membranes. May play a role in wax or cutin deposition in the cell walls of expanding epidermal cells and certain secretory tissues. This Vitis sp. (Grape) protein is Non-specific lipid-transfer protein P2.